Reading from the N-terminus, the 78-residue chain is Acyl carrier protein (78 aa).

The 76-residue stretch at 2–77 folds into the Carrier domain; it reads STIEERVKKI…EAIDYVTAHA (76 aa). Residue Ser37 is modified to O-(pantetheine 4'-phosphoryl)serine.

Belongs to the acyl carrier protein (ACP) family. 4'-phosphopantetheine is transferred from CoA to a specific serine of apo-ACP by AcpS. This modification is essential for activity because fatty acids are bound in thioester linkage to the sulfhydryl of the prosthetic group.

The protein resides in the cytoplasm. It functions in the pathway lipid metabolism; fatty acid biosynthesis. Its function is as follows. Carrier of the growing fatty acid chain in fatty acid biosynthesis. This is Acyl carrier protein from Ectopseudomonas mendocina (strain ymp) (Pseudomonas mendocina).